We begin with the raw amino-acid sequence, 202 residues long: MATQPRIGSISRVTSESDIRVEINLDGTGTVEIDTGVPFFDHMLTAFGVHGAFDLKVKATGDTHIDAHHTVEDTAIVLGQAIAQAVGDKRGIKRFGSFQLPMDETLCEAIVDFSGRPYFVTKGEPDYLVHSVIGSHYPTVLNEHFFESLALNAKITLHVLCRYGRDPHHITEAEFKAVARAIREAVGPDDRLTGIPSTKGAL.

The protein belongs to the imidazoleglycerol-phosphate dehydratase family.

It is found in the cytoplasm. The catalysed reaction is D-erythro-1-(imidazol-4-yl)glycerol 3-phosphate = 3-(imidazol-4-yl)-2-oxopropyl phosphate + H2O. Its pathway is amino-acid biosynthesis; L-histidine biosynthesis; L-histidine from 5-phospho-alpha-D-ribose 1-diphosphate: step 6/9. In Corynebacterium diphtheriae (strain ATCC 700971 / NCTC 13129 / Biotype gravis), this protein is Imidazoleglycerol-phosphate dehydratase.